Consider the following 142-residue polypeptide: Large ribosomal subunit protein uL11 (142 aa).

Belongs to the universal ribosomal protein uL11 family. Part of the ribosomal stalk of the 50S ribosomal subunit. Interacts with L10 and the large rRNA to form the base of the stalk. L10 forms an elongated spine to which L12 dimers bind in a sequential fashion forming a multimeric L10(L12)X complex. Post-translationally, one or more lysine residues are methylated.

Functionally, forms part of the ribosomal stalk which helps the ribosome interact with GTP-bound translation factors. This is Large ribosomal subunit protein uL11 from Nocardioides sp. (strain ATCC BAA-499 / JS614).